Consider the following 159-residue polypeptide: uncharacterized protein (159 aa).

The N-acetyltransferase domain maps to 4–153 (IKTDDLTHPA…HSRFLSLTLC (150 aa)).

It belongs to the acetyltransferase family.

This is an uncharacterized protein from Escherichia coli (strain K12).